A 141-amino-acid chain; its full sequence is Hemoglobin subunit alpha (141 aa).

Residues 1–141 (VLSSADKNNI…VSTVLTSKYR (141 aa)) enclose the Globin domain. The residue at position 3 (serine 3) is a Phosphoserine. N6-succinyllysine occurs at positions 7 and 11. Lysine 16 is subject to N6-acetyllysine; alternate. Lysine 16 carries the N6-succinyllysine; alternate modification. Position 24 is a phosphotyrosine (tyrosine 24). Serine 35 is subject to Phosphoserine. At lysine 40 the chain carries N6-succinyllysine. Serine 49 is modified (phosphoserine). Position 58 (histidine 58) interacts with O2. Residue histidine 87 participates in heme b binding. Serine 102 bears the Phosphoserine mark. Phosphothreonine occurs at positions 108, 134, and 137. Serine 138 is subject to Phosphoserine.

Belongs to the globin family. As to quaternary structure, heterotetramer of two alpha chains and two beta chains. In terms of tissue distribution, red blood cells.

Functionally, involved in oxygen transport from the lung to the various peripheral tissues. Its function is as follows. Hemopressin acts as an antagonist peptide of the cannabinoid receptor CNR1. Hemopressin-binding efficiently blocks cannabinoid receptor CNR1 and subsequent signaling. The sequence is that of Hemoglobin subunit alpha (HBA) from Paguma larvata (Masked palm civet).